The chain runs to 475 residues: Ribulose bisphosphate carboxylase large chain (475 aa).

The propeptide occupies 1–2 (MS). The residue at position 3 (proline 3) is an N-acetylproline. An N6,N6,N6-trimethyllysine modification is found at lysine 14. Lysine 175 (proton acceptor) is an active-site residue. D-ribulose 1,5-bisphosphate-binding residues include lysine 175 and lysine 177. Residues lysine 201, aspartate 203, and glutamate 204 each coordinate Mg(2+). The residue at position 201 (lysine 201) is an N6-carboxylysine. D-ribulose 1,5-bisphosphate is bound at residue glutamate 204. The active-site Proton acceptor is the histidine 294. Arginine 295, histidine 327, lysine 334, serine 379, glycine 381, glycine 403, and glycine 404 together coordinate D-ribulose 1,5-bisphosphate.

Belongs to the RuBisCO large chain family. Type I subfamily. As to quaternary structure, heterohexadecamer of 8 large chains and 8 small chains. Heterohexadecamer; disulfide-linked. The disulfide link is formed within the large subunit homodimers. Mg(2+) is required as a cofactor. The disulfide bond which can form in the large chain dimeric partners within the hexadecamer appears to be associated with oxidative stress and protein turnover.

Its subcellular location is the plastid. The protein localises to the chloroplast. It catalyses the reaction 2 (2R)-3-phosphoglycerate + 2 H(+) = D-ribulose 1,5-bisphosphate + CO2 + H2O. The catalysed reaction is D-ribulose 1,5-bisphosphate + O2 = 2-phosphoglycolate + (2R)-3-phosphoglycerate + 2 H(+). RuBisCO catalyzes two reactions: the carboxylation of D-ribulose 1,5-bisphosphate, the primary event in carbon dioxide fixation, as well as the oxidative fragmentation of the pentose substrate in the photorespiration process. Both reactions occur simultaneously and in competition at the same active site. Binds to abscisic acid (ABA); only half of the possible binding sites are occupied in the crystal and there are indications this is a low affinity site. This Pisum sativum (Garden pea) protein is Ribulose bisphosphate carboxylase large chain.